A 434-amino-acid chain; its full sequence is Zinc carboxypeptidase (434 aa).

A signal peptide spans Met-1–Ala-33. Positions Lys-34 to Gln-114 are cleaved as a propeptide — activation peptide. The region spanning Gly-122 to Ser-423 is the Peptidase M14 domain. Zn(2+)-binding residues include His-183 and Glu-186. Positions Gly-270–His-295 are disordered. Residues Ala-282 to His-293 show a composition bias toward basic residues. His-315 serves as a coordination point for Zn(2+). Catalysis depends on Glu-388, which acts as the Proton donor/acceptor.

It belongs to the peptidase M14 family. Requires Zn(2+) as cofactor.

It carries out the reaction Releases a C-terminal residue, which may be hydrophobic or positively charged.. Functionally, carboxypeptidase that possesses the specificities of both mammalian Cpase A and B. Thus shows broad substrate specificity, being able to cleave Cbz-Gly-Leu, Cbz-Gly-Val, Cbz-Gly-Phe, Cbz-Gly-Lys and Bz-Gly-Arg in vitro. The protein is Zinc carboxypeptidase of Saccharothrix mutabilis subsp. capreolus (Streptomyces capreolus).